Here is a 37-residue protein sequence, read N- to C-terminus: Small ribosomal subunit protein eS32 (37 aa).

Belongs to the eukaryotic ribosomal protein eS32 family. As to quaternary structure, part of the small ribosomal subunit.

This Pyrococcus furiosus (strain ATCC 43587 / DSM 3638 / JCM 8422 / Vc1) protein is Small ribosomal subunit protein eS32.